Consider the following 353-residue polypeptide: Quinolinate synthase (353 aa).

Residues H47 and S68 each contribute to the iminosuccinate site. C113 contacts [4Fe-4S] cluster. Residues 139-141 and S156 each bind iminosuccinate; that span reads YAN. C200 is a [4Fe-4S] cluster binding site. Iminosuccinate-binding positions include 226-228 and T243; that span reads HPE. C297 contributes to the [4Fe-4S] cluster binding site.

The protein belongs to the quinolinate synthase family. Type 1 subfamily. It depends on [4Fe-4S] cluster as a cofactor.

It localises to the cytoplasm. It carries out the reaction iminosuccinate + dihydroxyacetone phosphate = quinolinate + phosphate + 2 H2O + H(+). It participates in cofactor biosynthesis; NAD(+) biosynthesis; quinolinate from iminoaspartate: step 1/1. Functionally, catalyzes the condensation of iminoaspartate with dihydroxyacetone phosphate to form quinolinate. The protein is Quinolinate synthase of Pectobacterium atrosepticum (strain SCRI 1043 / ATCC BAA-672) (Erwinia carotovora subsp. atroseptica).